A 233-amino-acid chain; its full sequence is Orotidine 5'-phosphate decarboxylase (233 aa).

Substrate contacts are provided by residues aspartate 11, lysine 34, aspartate 61 to threonine 70, threonine 117, arginine 179, glutamine 188, glycine 208, and arginine 209. Lysine 63 serves as the catalytic Proton donor.

Belongs to the OMP decarboxylase family. Type 1 subfamily. Homodimer.

It carries out the reaction orotidine 5'-phosphate + H(+) = UMP + CO2. The protein operates within pyrimidine metabolism; UMP biosynthesis via de novo pathway; UMP from orotate: step 2/2. Its function is as follows. Catalyzes the decarboxylation of orotidine 5'-monophosphate (OMP) to uridine 5'-monophosphate (UMP). The protein is Orotidine 5'-phosphate decarboxylase of Streptococcus pneumoniae (strain CGSP14).